A 487-amino-acid chain; its full sequence is Ribulose bisphosphate carboxylase large chain (487 aa).

The substrate site is built by asparagine 127 and threonine 177. Lysine 179 functions as the Proton acceptor in the catalytic mechanism. Position 181 (lysine 181) interacts with substrate. Mg(2+)-binding residues include lysine 205, aspartate 207, and glutamate 208. Lysine 205 carries the N6-carboxylysine modification. The active-site Proton acceptor is histidine 297. 3 residues coordinate substrate: arginine 298, histidine 330, and serine 382.

The protein belongs to the RuBisCO large chain family. Type I subfamily. As to quaternary structure, heterohexadecamer of 8 large chains and 8 small chains. The cofactor is Mg(2+).

It carries out the reaction 2 (2R)-3-phosphoglycerate + 2 H(+) = D-ribulose 1,5-bisphosphate + CO2 + H2O. It catalyses the reaction D-ribulose 1,5-bisphosphate + O2 = 2-phosphoglycolate + (2R)-3-phosphoglycerate + 2 H(+). In terms of biological role, ruBisCO catalyzes two reactions: the carboxylation of D-ribulose 1,5-bisphosphate, the primary event in carbon dioxide fixation, as well as the oxidative fragmentation of the pentose substrate. Both reactions occur simultaneously and in competition at the same active site. In Paracoccus denitrificans (strain Pd 1222), this protein is Ribulose bisphosphate carboxylase large chain.